A 462-amino-acid polypeptide reads, in one-letter code: Cytokine-like nuclear factor N-PAC (462 aa).

Residues 8 to 66 form the PWWP domain; sequence IGDLVWGKLGRYPPWPGKVVSPPKDLKKPRGKKCFFVKFFGTEDHAWIKVEQLKPYHPH. Residues 91-111 are compositionally biased toward basic and acidic residues; sequence KKAKGKDQSHSDDKSKSDKGR. Residues 91–139 form a disordered region; that stretch reads KKAKGKDQSHSDDKSKSDKGRKAAKPMKIIEEDDEDAFKGGSSDKPASS. Residues 169–462 are dehydrogenase domain; sequence GSITPTDKRI…MSAVYRAYIH (294 aa). NAD(+)-binding positions include 179 to 193, Thr-270, and Lys-414; that span reads GFLGLGLMGSGVVSN.

The protein belongs to the HIBADH-related family. NP60 subfamily. In terms of assembly, homotetramere. Binds to mononucleosomes.

It localises to the nucleus. It is found in the chromosome. May have oxidoreductase activity. Regulates p38 MAP kinase activity by mediating stress activation of mapk14 and specifically regulating mapk14 signaling. In terms of biological role, cytokine-like nuclear factor with chromatin gene reader activity involved in chromatin modification and regulation of gene expression. Acts as a nucleosome-destabilizing factor that is recruited to genes during transcriptional activation. Recognizes and binds histone H3 without a preference for specific epigenetic markers and also binds DNA. Interacts with KDM1B and promotes its histone demethylase activity by facilitating the capture of H3 tails, they form a multifunctional enzyme complex that modifies transcribed chromatin and facilitates Pol II transcription through nucleosomes. This chain is Cytokine-like nuclear factor N-PAC (glyr1), found in Danio rerio (Zebrafish).